The chain runs to 550 residues: Membrane protein insertase YidC (550 aa).

Residues 3-23 (IKRTVLWVIFFMSAVMLFDNW) traverse the membrane as a helical segment. A disordered region spans residues 34–73 (FPSATQTKTAAPAAPGSSTTASQPTDLPQTTAAAPGSTTP). A compositionally biased stretch (low complexity) spans 35-73 (PSATQTKTAAPAAPGSSTTASQPTDLPQTTAAAPGSTTP). 4 consecutive transmembrane segments (helical) span residues 363 to 383 (WGWA…PLSA), 429 to 449 (FGGC…YWVL), 472 to 492 (PYFI…KLNP), and 503 to 523 (MMFM…GLVL).

The protein belongs to the OXA1/ALB3/YidC family. Type 1 subfamily. As to quaternary structure, interacts with the Sec translocase complex via SecD. Specifically interacts with transmembrane segments of nascent integral membrane proteins during membrane integration.

It localises to the cell inner membrane. Required for the insertion and/or proper folding and/or complex formation of integral membrane proteins into the membrane. Involved in integration of membrane proteins that insert both dependently and independently of the Sec translocase complex, as well as at least some lipoproteins. Aids folding of multispanning membrane proteins. In Paraburkholderia phymatum (strain DSM 17167 / CIP 108236 / LMG 21445 / STM815) (Burkholderia phymatum), this protein is Membrane protein insertase YidC.